Reading from the N-terminus, the 488-residue chain is Phenylalanine--tRNA ligase alpha subunit (488 aa).

L-phenylalanine contacts are provided by residues Thr315, 354-356 (QLD), Phe394, and Phe419.

It belongs to the class-II aminoacyl-tRNA synthetase family. Phe-tRNA synthetase alpha subunit type 2 subfamily. Tetramer of two alpha and two beta subunits. Requires Mg(2+) as cofactor.

It localises to the cytoplasm. The enzyme catalyses tRNA(Phe) + L-phenylalanine + ATP = L-phenylalanyl-tRNA(Phe) + AMP + diphosphate + H(+). The polypeptide is Phenylalanine--tRNA ligase alpha subunit (Pyrobaculum calidifontis (strain DSM 21063 / JCM 11548 / VA1)).